The primary structure comprises 210 residues: Large ribosomal subunit protein uL4 (210 aa).

The segment covering 41-52 has biased composition (polar residues); the sequence is MNNARQGTASSK. A disordered region spans residues 41-80; that stretch reads MNNARQGTASSKTRSEVRGGGRKPWRQKGTGRARAGSSRS. Residues 60 to 71 show a composition bias toward basic residues; it reads GGRKPWRQKGTG.

This sequence belongs to the universal ribosomal protein uL4 family. Part of the 50S ribosomal subunit.

In terms of biological role, one of the primary rRNA binding proteins, this protein initially binds near the 5'-end of the 23S rRNA. It is important during the early stages of 50S assembly. It makes multiple contacts with different domains of the 23S rRNA in the assembled 50S subunit and ribosome. Its function is as follows. Forms part of the polypeptide exit tunnel. This Acaryochloris marina (strain MBIC 11017) protein is Large ribosomal subunit protein uL4.